A 100-amino-acid polypeptide reads, in one-letter code: Urease subunit gamma 1 (100 aa).

The protein belongs to the urease gamma subunit family. Heterotrimer of UreA (gamma), UreB (beta) and UreC (alpha) subunits. Three heterotrimers associate to form the active enzyme.

Its subcellular location is the cytoplasm. It carries out the reaction urea + 2 H2O + H(+) = hydrogencarbonate + 2 NH4(+). The protein operates within nitrogen metabolism; urea degradation; CO(2) and NH(3) from urea (urease route): step 1/1. Functionally, disruption of the ure1 gene cluster suggests that it protects brucellae during their passage through the stomach. The major route of infection in human brucellosis is oral. In Brucella abortus (strain 2308), this protein is Urease subunit gamma 1.